The sequence spans 425 residues: MAFLALGINHKTASVDVRERVAFTPEQLVDALQQLCRLTASREAAILSTCNRSELYIEQDHIAADAVLQWLADYHQLSLDELRASAYIHEEHDAVRHMMRVASGLDSLVLGEPQILGQMKSAYAVAREAGTVGPLLGRLFQATFSAAKQVRTDTAIGENPVSVAFAAVSLAKQIFSDLGRSQALLIGAGETITLVARHLHEQGVRRIVVANRTLERASILAEQFGAHAVLLADIPQELANSDIVISSTASQLPILGKGAVESALKQRRHKPIFMVDIAVPRDIEPQVGELDDVYLYTVDDLHEVVAENLKSRQGAAQAAEELVSAGADDFMVRLRELAAVDVLKAYRQQSERLRDEELQKALRLLGNGGNPEDVLMQLARGLTNKLLHAPSVQLKKLSAEGRLDALAMAQELFALHEGSTDKTPQ.

Substrate contacts are provided by residues 49 to 52, Ser-107, 112 to 114, and Gln-118; these read TCNR and EPQ. Cys-50 acts as the Nucleophile in catalysis. Residue 187–192 participates in NADP(+) binding; that stretch reads GAGETI.

It belongs to the glutamyl-tRNA reductase family. Homodimer.

It carries out the reaction (S)-4-amino-5-oxopentanoate + tRNA(Glu) + NADP(+) = L-glutamyl-tRNA(Glu) + NADPH + H(+). Its pathway is porphyrin-containing compound metabolism; protoporphyrin-IX biosynthesis; 5-aminolevulinate from L-glutamyl-tRNA(Glu): step 1/2. Its function is as follows. Catalyzes the NADPH-dependent reduction of glutamyl-tRNA(Glu) to glutamate 1-semialdehyde (GSA). In Pseudomonas entomophila (strain L48), this protein is Glutamyl-tRNA reductase.